Here is a 225-residue protein sequence, read N- to C-terminus: Putative ankyrin repeat protein RBE_1025 (225 aa).

ANK repeat units follow at residues 6–35 (LSKD…AINP), 41–71 (NGKT…NVNI), 75–120 (TGFT…DVNI), and 124–153 (KGNT…SPFI).

The sequence is that of Putative ankyrin repeat protein RBE_1025 from Rickettsia bellii (strain RML369-C).